We begin with the raw amino-acid sequence, 1058 residues long: Carbamoyl phosphate synthase large chain (1058 aa).

Positions 1 to 401 (MPKRTDIQKI…SLLKACRSLE (401 aa)) are carboxyphosphate synthetic domain. Arg-129, Arg-169, Gly-175, Gly-176, Arg-208, Ile-210, Glu-215, Gly-241, Ile-242, His-243, Gln-284, and Glu-298 together coordinate ATP. The ATP-grasp 1 domain occupies 133-327 (KQLMEELEQP…IAKLAAKIAV (195 aa)). Residues Gln-284, Glu-298, and Asn-300 each coordinate Mg(2+). Positions 284, 298, and 300 each coordinate Mn(2+). Positions 402 to 546 (IGVHHNEIPE…YSTYGWENES (145 aa)) are oligomerization domain. The carbamoyl phosphate synthetic domain stretch occupies residues 547–929 (IRSDKESVLV…ALYKAFEASY (383 aa)). Residues 671–861 (EQALKELDIP…MAQVATKLIL (191 aa)) form the ATP-grasp 2 domain. ATP is bound by residues Arg-707, Ser-746, Ile-748, Glu-752, Gly-777, Val-778, His-779, Ser-780, Gln-820, and Glu-832. Mg(2+)-binding residues include Gln-820, Glu-832, and Asn-834. Residues Gln-820, Glu-832, and Asn-834 each contribute to the Mn(2+) site. Residues 930-1058 (LHLPTFGNVV…ESRSFVTEAI (129 aa)) form the MGS-like domain. The tract at residues 930 to 1058 (LHLPTFGNVV…ESRSFVTEAI (129 aa)) is allosteric domain.

It belongs to the CarB family. As to quaternary structure, composed of two chains; the small (or glutamine) chain promotes the hydrolysis of glutamine to ammonia, which is used by the large (or ammonia) chain to synthesize carbamoyl phosphate. Tetramer of heterodimers (alpha,beta)4. Mg(2+) is required as a cofactor. Mn(2+) serves as cofactor.

The catalysed reaction is hydrogencarbonate + L-glutamine + 2 ATP + H2O = carbamoyl phosphate + L-glutamate + 2 ADP + phosphate + 2 H(+). The enzyme catalyses hydrogencarbonate + NH4(+) + 2 ATP = carbamoyl phosphate + 2 ADP + phosphate + 2 H(+). It functions in the pathway amino-acid biosynthesis; L-arginine biosynthesis; carbamoyl phosphate from bicarbonate: step 1/1. It participates in pyrimidine metabolism; UMP biosynthesis via de novo pathway; (S)-dihydroorotate from bicarbonate: step 1/3. Functionally, large subunit of the glutamine-dependent carbamoyl phosphate synthetase (CPSase). CPSase catalyzes the formation of carbamoyl phosphate from the ammonia moiety of glutamine, carbonate, and phosphate donated by ATP, constituting the first step of 2 biosynthetic pathways, one leading to arginine and/or urea and the other to pyrimidine nucleotides. The large subunit (synthetase) binds the substrates ammonia (free or transferred from glutamine from the small subunit), hydrogencarbonate and ATP and carries out an ATP-coupled ligase reaction, activating hydrogencarbonate by forming carboxy phosphate which reacts with ammonia to form carbamoyl phosphate. This chain is Carbamoyl phosphate synthase large chain, found in Streptococcus pneumoniae (strain 70585).